The sequence spans 184 residues: GTP cyclohydrolase 1 (184 aa).

Cys-75, His-78, and Cys-146 together coordinate Zn(2+).

The protein belongs to the GTP cyclohydrolase I family. As to quaternary structure, toroid-shaped homodecamer, composed of two pentamers of five dimers.

The enzyme catalyses GTP + H2O = 7,8-dihydroneopterin 3'-triphosphate + formate + H(+). Its pathway is cofactor biosynthesis; 7,8-dihydroneopterin triphosphate biosynthesis; 7,8-dihydroneopterin triphosphate from GTP: step 1/1. This chain is GTP cyclohydrolase 1, found in Pseudoalteromonas atlantica (strain T6c / ATCC BAA-1087).